A 463-amino-acid chain; its full sequence is Ribosomal protein uS12 methylthiotransferase RimO (463 aa).

Residues 11–126 form the MTTase N-terminal domain; the sequence is PKIGFVSLGC…VMEVVHTHCP (116 aa). [4Fe-4S] cluster-binding residues include cysteine 20, cysteine 56, cysteine 85, cysteine 161, cysteine 165, and cysteine 168. The Radical SAM core domain maps to 147–388; it reads LTPRHYAYLK…MAVAEEVSTA (242 aa). In terms of domain architecture, TRAM spans 391–463; sequence QRRVGQTMQV…QGHDLVGVPV (73 aa).

Belongs to the methylthiotransferase family. RimO subfamily. Requires [4Fe-4S] cluster as cofactor.

Its subcellular location is the cytoplasm. It carries out the reaction L-aspartate(89)-[ribosomal protein uS12]-hydrogen + (sulfur carrier)-SH + AH2 + 2 S-adenosyl-L-methionine = 3-methylsulfanyl-L-aspartate(89)-[ribosomal protein uS12]-hydrogen + (sulfur carrier)-H + 5'-deoxyadenosine + L-methionine + A + S-adenosyl-L-homocysteine + 2 H(+). Catalyzes the methylthiolation of an aspartic acid residue of ribosomal protein uS12. The chain is Ribosomal protein uS12 methylthiotransferase RimO from Acidovorax sp. (strain JS42).